A 343-amino-acid polypeptide reads, in one-letter code: Cytoplasmic tRNA 2-thiolation protein 1 (343 aa).

The protein belongs to the TtcA family. CTU1/NCS6/ATPBD3 subfamily.

The protein localises to the cytoplasm. The protein operates within tRNA modification; 5-methoxycarbonylmethyl-2-thiouridine-tRNA biosynthesis. Plays a central role in 2-thiolation of mcm(5)S(2)U at tRNA wobble positions of tRNA(Lys), tRNA(Glu) and tRNA(Gln). Directly binds tRNAs and probably acts by catalyzing adenylation of tRNAs, an intermediate required for 2-thiolation. It is unclear whether it acts as a sulfurtransferase that transfers sulfur from thiocarboxylated URM1 onto the uridine of tRNAs at wobble position. The polypeptide is Cytoplasmic tRNA 2-thiolation protein 1 (Drosophila grimshawi (Hawaiian fruit fly)).